The primary structure comprises 200 residues: Recombination protein RecR (200 aa).

The C4-type zinc-finger motif lies at 59-74 (CEKCNTFTEAQICEVC). The 96-residue stretch at 82–177 (ALLCVVETPA…AVTRLARGVP (96 aa)) folds into the Toprim domain.

The protein belongs to the RecR family.

Its function is as follows. May play a role in DNA repair. It seems to be involved in an RecBC-independent recombinational process of DNA repair. It may act with RecF and RecO. The chain is Recombination protein RecR from Burkholderia mallei (strain NCTC 10247).